A 241-amino-acid polypeptide reads, in one-letter code: MNRCWALFLSLCCYLRLVSAEGDPIPEELYEMLSDHSIRSFDDLQRLLHGDSLDEDGAELDLNLTRSHSGGELESLSRGRRSLGSPTVAEPAVIAECKTRTEVSEISRRLIDRTNANFLVWPPCVEVQRCSGCCNNRNVQCRPTQVQDRKVQVKKIEIVRKKKIFKKATVTLVDHLACRCETVMARAVTRTPGSSQEQRAARTPQTRVTIRTVRVRRPPKGKHRKFKHTHDKTALKETLGA.

Positions 1 to 20 are cleaved as a signal peptide; the sequence is MNRCWALFLSLCCYLRLVSA. Residues 21 to 81 constitute a propeptide, removed in mature form; it reads EGDPIPEELY…ELESLSRGRR (61 aa). N63 is a glycosylation site (N-linked (GlcNAc...) asparagine). 3 disulfide bridges follow: C97/C141, C130/C178, and C134/C180. Residues 191 to 241 constitute a propeptide, removed in mature form; the sequence is TPGSSQEQRAARTPQTRVTIRTVRVRRPPKGKHRKFKHTHDKTALKETLGA. Residues 217 to 230 show a composition bias toward basic residues; the sequence is RPPKGKHRKFKHTH. A disordered region spans residues 217-241; it reads RPPKGKHRKFKHTHDKTALKETLGA.

This sequence belongs to the PDGF/VEGF growth factor family. In terms of assembly, antiparallel homodimer; disulfide-linked. Antiparallel heterodimer with PDGFA; disulfide-linked. The PDGFB homodimer interacts with PDGFRA and PDGFRB homodimers, and with heterodimers formed by PDGFRA and PDGFRB. The heterodimer composed of PDGFA and PDGFB interacts with PDGFRB homodimers, and with heterodimers formed by PDGFRA and PDGFRB. Interacts with XLKD1. Interacts with LRP1. Interacts with SORL1 (via the N-terminal ectodomain). Interacts with CD82; this interaction inhibits PDGFB-mediated signaling pathway.

It localises to the secreted. Growth factor that plays an essential role in the regulation of embryonic development, cell proliferation, cell migration, survival and chemotaxis. Potent mitogen for cells of mesenchymal origin. Required for normal proliferation and recruitment of pericytes and vascular smooth muscle cells in the central nervous system, skin, lung, heart and placenta. Required for normal blood vessel development, and for normal development of kidney glomeruli. Plays an important role in wound healing. Signaling is modulated by the formation of heterodimers with PDGFA. The sequence is that of Platelet-derived growth factor subunit B (PDGFB) from Ovis aries (Sheep).